Reading from the N-terminus, the 227-residue chain is Type II restriction enzyme HhaII (227 aa).

As to quaternary structure, homodimer.

It catalyses the reaction Endonucleolytic cleavage of DNA to give specific double-stranded fragments with terminal 5'-phosphates.. Functionally, a P subtype restriction enzyme that recognizes the double-stranded sequence 5'-GANTC-3' and cleaves after G-1. This Haemophilus parahaemolyticus protein is Type II restriction enzyme HhaII (hhaIIR).